We begin with the raw amino-acid sequence, 754 residues long: Lysyl oxidase homolog 3 (754 aa).

The N-terminal stretch at Met-1–Gly-26 is a signal peptide. 4 SRCR domains span residues Phe-45–Lys-146, Val-170–Val-283, Val-308–Asn-408, and Ile-418–Ser-526. Intrachain disulfides connect Cys-71/Cys-135, Cys-84/Cys-145, Cys-115/Cys-125, Cys-202/Cys-272, Cys-215/Cys-282, Cys-249/Cys-259, Cys-333/Cys-397, Cys-346/Cys-407, Cys-377/Cys-387, Cys-447/Cys-512, Cys-460/Cys-525, Cys-493/Cys-503, Cys-555/Cys-561, Cys-607/Cys-655, Cys-639/Cys-645, Cys-667/Cys-677, and Cys-714/Cys-728. An N-linked (GlcNAc...) asparagine glycan is attached at Asn-112. Asn-267 is a glycosylation site (N-linked (GlcNAc...) asparagine). 2 N-linked (GlcNAc...) asparagine glycosylation sites follow: Asn-391 and Asn-482. The interval Ser-530 to Ala-733 is lysyl-oxidase like. The Cu cation site is built by His-608, His-610, and His-612. Residue Asn-626 is glycosylated (N-linked (GlcNAc...) asparagine). A cross-link (lysine tyrosylquinone (Lys-Tyr)) is located at residues Lys-635–Tyr-671. Position 671 is a 2',4',5'-topaquinone (Tyr-671).

The protein belongs to the lysyl oxidase family. It depends on Cu cation as a cofactor. Requires lysine tyrosylquinone residue as cofactor. The lysine tyrosylquinone cross-link (LTQ) is generated by condensation of the epsilon-amino group of a lysine with a topaquinone produced by oxidation of tyrosine. Expressed in palate: predominantly present in the palate mesenchyme and tongue (at protein level). In spine, expressed in the original intervertebral disk, cartilage primordia, anterior and posterior longitudinal ligaments, meninges of spinal cord, lung and heart. In eyes, strongly expressed in the skin of the eyelid and weakly expressed in the cornea and sclera. In lung, predominantly expressed in the pulmonary mesenchyme. In developing muscle, expressed at myofiber ends (at protein level).

Its subcellular location is the secreted. It localises to the extracellular space. The protein resides in the cytoplasm. It is found in the nucleus. It catalyses the reaction L-lysyl-[protein] + O2 + H2O = (S)-2-amino-6-oxohexanoyl-[protein] + H2O2 + NH4(+). It carries out the reaction N(6)-acetyl-L-lysyl-[protein] + O2 + H2O = acetamide + (S)-2-amino-6-oxohexanoyl-[protein] + H2O2. Protein-lysine 6-oxidase that mediates the oxidation of peptidyl lysine residues to allysine in target proteins. Catalyzes the post-translational oxidative deamination of peptidyl lysine residues in precursors of elastin and different types of collagens, a prerequisite in the formation of cross-links between collagens and elastin. Required for somite boundary formation by catalyzing oxidation of fibronectin (FN1), enhancing integrin signaling in myofibers and their adhesion to the myotendinous junction (MTJ). Acts as a regulator of inflammatory response by inhibiting differentiation of naive CD4(+) T-cells into T-helper Th17 or regulatory T-cells (Treg): acts by interacting with STAT3 in the nucleus and catalyzing both deacetylation and oxidation of lysine residues on STAT3, leading to disrupt STAT3 dimerization and inhibit STAT3 transcription activity. Oxidation of lysine residues to allysine on STAT3 preferentially takes place on lysine residues that are acetylated. Also able to catalyze deacetylation of lysine residues on STAT3. The polypeptide is Lysyl oxidase homolog 3 (Mus musculus (Mouse)).